Here is a 379-residue protein sequence, read N- to C-terminus: DnaJ homolog subfamily B member 14 (379 aa).

The Cytoplasmic portion of the chain corresponds to 1–244; the sequence is MEGNRDEAEK…GHEREEERGD (244 aa). The interval 55 to 94 is disordered; that stretch reads STAGNSPHCRKPSGSGDQSKPNCTKDSTSGSGEGGKGYTK. Polar residues predominate over residues 69–84; sequence SGDQSKPNCTKDSTSG. The 65-residue stretch at 108–172 folds into the J domain; the sequence is NYYEVLGVTK…EKRKQYDLTG (65 aa). The interval 219–241 is disordered; that stretch reads SNGRAGYSQQHQHRHSGHEREEE. Residues 245–265 form a helical membrane-spanning segment; the sequence is GGFSVFIQLMPIIVLILVSLL. At 266–379 the chain is on the lumenal side; sequence SQLMVSNPPY…ERLTSLYKGG (114 aa).

It belongs to the DnaJ family. DNAJB12/DNAJB14 subfamily. Interacts (via J domain) with HSPA8/Hsc70. Forms a multiprotein complex, at least composed of DNAJB12, DNAJB14, HSPA8/Hsc70 and SGTA; interaction with DNAJB14 and HSPA8/Hsc70 is direct.

Its subcellular location is the endoplasmic reticulum membrane. The protein resides in the nucleus membrane. Acts as a co-chaperone with HSPA8/Hsc70; required to promote protein folding and trafficking, prevent aggregation of client proteins, and promote unfolded proteins to endoplasmic reticulum-associated degradation (ERAD) pathway. Acts by determining HSPA8/Hsc70's ATPase and polypeptide-binding activities. Can also act independently of HSPA8/Hsc70: together with DNAJB12, acts as a chaperone that promotes maturation of potassium channels KCND2 and KCNH2 by stabilizing nascent channel subunits and assembling them into tetramers. While stabilization of nascent channel proteins is dependent on HSPA8/Hsc70, the process of oligomerization of channel subunits is independent of HSPA8/Hsc70. When overexpressed, forms membranous structures together with DNAJB12 and HSPA8/Hsc70 within the nucleus; the role of these structures, named DJANGOs, is still unclear. In terms of biological role, (Microbial infection) In case of infection by polyomavirus, involved in the virus endoplasmic reticulum membrane penetration and infection. This is DnaJ homolog subfamily B member 14 from Homo sapiens (Human).